Reading from the N-terminus, the 188-residue chain is Elongation factor P (188 aa).

It belongs to the elongation factor P family.

Its subcellular location is the cytoplasm. The protein operates within protein biosynthesis; polypeptide chain elongation. Functionally, involved in peptide bond synthesis. Stimulates efficient translation and peptide-bond synthesis on native or reconstituted 70S ribosomes in vitro. Probably functions indirectly by altering the affinity of the ribosome for aminoacyl-tRNA, thus increasing their reactivity as acceptors for peptidyl transferase. The sequence is that of Elongation factor P from Bdellovibrio bacteriovorus (strain ATCC 15356 / DSM 50701 / NCIMB 9529 / HD100).